A 161-amino-acid chain; its full sequence is 6,7-dimethyl-8-ribityllumazine synthase (161 aa).

Residues Trp31, 65-67 (TFE), and 89-91 (CVV) each bind 5-amino-6-(D-ribitylamino)uracil. 94-95 (DT) contributes to the (2S)-2-hydroxy-3-oxobutyl phosphate binding site. His97 (proton donor) is an active-site residue. Phe122 serves as a coordination point for 5-amino-6-(D-ribitylamino)uracil. Arg136 lines the (2S)-2-hydroxy-3-oxobutyl phosphate pocket.

This sequence belongs to the DMRL synthase family.

The enzyme catalyses (2S)-2-hydroxy-3-oxobutyl phosphate + 5-amino-6-(D-ribitylamino)uracil = 6,7-dimethyl-8-(1-D-ribityl)lumazine + phosphate + 2 H2O + H(+). It participates in cofactor biosynthesis; riboflavin biosynthesis; riboflavin from 2-hydroxy-3-oxobutyl phosphate and 5-amino-6-(D-ribitylamino)uracil: step 1/2. Functionally, catalyzes the formation of 6,7-dimethyl-8-ribityllumazine by condensation of 5-amino-6-(D-ribitylamino)uracil with 3,4-dihydroxy-2-butanone 4-phosphate. This is the penultimate step in the biosynthesis of riboflavin. In Porphyromonas gingivalis (strain ATCC 33277 / DSM 20709 / CIP 103683 / JCM 12257 / NCTC 11834 / 2561), this protein is 6,7-dimethyl-8-ribityllumazine synthase.